Reading from the N-terminus, the 539-residue chain is Phosphoenolpyruvate carboxykinase (ATP) (539 aa).

Positions 64, 206, and 212 each coordinate substrate. ATP is bound by residues lysine 212, histidine 231, and 247-255 (GLSGTGKTT). Lysine 212 and histidine 231 together coordinate Mn(2+). Residue aspartate 268 coordinates Mn(2+). Residues glutamate 296, arginine 332, 448–449 (RI), and threonine 454 each bind ATP. Arginine 332 provides a ligand contact to substrate.

Belongs to the phosphoenolpyruvate carboxykinase (ATP) family. As to quaternary structure, monomer. Mn(2+) serves as cofactor.

The protein resides in the cytoplasm. It carries out the reaction oxaloacetate + ATP = phosphoenolpyruvate + ADP + CO2. The protein operates within carbohydrate biosynthesis; gluconeogenesis. Its function is as follows. Involved in the gluconeogenesis. Catalyzes the conversion of oxaloacetate (OAA) to phosphoenolpyruvate (PEP) through direct phosphoryl transfer between the nucleoside triphosphate and OAA. The sequence is that of Phosphoenolpyruvate carboxykinase (ATP) from Salmonella agona (strain SL483).